Reading from the N-terminus, the 224-residue chain is Probable GTP-binding protein EngB (224 aa).

The region spanning 31-205 (IGVEIAFAGR…LSILNDWCHP (175 aa)) is the EngB-type G domain. GTP contacts are provided by residues 39 to 46 (GRSNAGKS), 66 to 70 (GRTQL), 84 to 87 (DLPG), 151 to 154 (TKSD), and 184 to 186 (LSS). Mg(2+) is bound by residues serine 46 and threonine 68.

The protein belongs to the TRAFAC class TrmE-Era-EngA-EngB-Septin-like GTPase superfamily. EngB GTPase family. Mg(2+) serves as cofactor.

Functionally, necessary for normal cell division and for the maintenance of normal septation. The polypeptide is Probable GTP-binding protein EngB (Shewanella frigidimarina (strain NCIMB 400)).